The chain runs to 81 residues: Sulfur carrier protein TusA (81 aa).

Cys19 functions as the Cysteine persulfide intermediate in the catalytic mechanism.

It belongs to the sulfur carrier protein TusA family.

It is found in the cytoplasm. In terms of biological role, sulfur carrier protein which probably makes part of a sulfur-relay system. The polypeptide is Sulfur carrier protein TusA (Shewanella baltica (strain OS223)).